The chain runs to 450 residues: Glucose-6-phosphate isomerase (450 aa).

Threonine 39 carries the post-translational modification Phosphothreonine. The Proton donor role is filled by glutamate 291. Active-site residues include histidine 312 and lysine 426.

Belongs to the GPI family.

It is found in the cytoplasm. The enzyme catalyses alpha-D-glucose 6-phosphate = beta-D-fructose 6-phosphate. It functions in the pathway carbohydrate biosynthesis; gluconeogenesis. The protein operates within carbohydrate degradation; glycolysis; D-glyceraldehyde 3-phosphate and glycerone phosphate from D-glucose: step 2/4. Its function is as follows. Catalyzes the reversible isomerization of glucose-6-phosphate to fructose-6-phosphate. In Bacillus mycoides (strain KBAB4) (Bacillus weihenstephanensis), this protein is Glucose-6-phosphate isomerase.